The sequence spans 378 residues: Putative glutamate--cysteine ligase 2 (378 aa).

The protein belongs to the glutamate--cysteine ligase type 2 family. YbdK subfamily.

It catalyses the reaction L-cysteine + L-glutamate + ATP = gamma-L-glutamyl-L-cysteine + ADP + phosphate + H(+). Its function is as follows. ATP-dependent carboxylate-amine ligase which exhibits weak glutamate--cysteine ligase activity. The polypeptide is Putative glutamate--cysteine ligase 2 (Ectopseudomonas mendocina (strain ymp) (Pseudomonas mendocina)).